The sequence spans 367 residues: DNA replication and repair protein RecF (367 aa).

30-37 (GENAQGKT) provides a ligand contact to ATP.

Belongs to the RecF family.

It is found in the cytoplasm. In terms of biological role, the RecF protein is involved in DNA metabolism; it is required for DNA replication and normal SOS inducibility. RecF binds preferentially to single-stranded, linear DNA. It also seems to bind ATP. This Chlamydia caviae (strain ATCC VR-813 / DSM 19441 / 03DC25 / GPIC) (Chlamydophila caviae) protein is DNA replication and repair protein RecF.